The following is a 227-amino-acid chain: Type II restriction enzyme HhaII (227 aa).

As to quaternary structure, homodimer.

It carries out the reaction Endonucleolytic cleavage of DNA to give specific double-stranded fragments with terminal 5'-phosphates.. Functionally, a P subtype restriction enzyme that recognizes the double-stranded sequence 5'-GANTC-3' and cleaves after G-1. The protein is Type II restriction enzyme HhaII (hhaIIR) of Haemophilus parahaemolyticus.